Reading from the N-terminus, the 156-residue chain is Endogenous retrovirus group K member 113 Pro protein (156 aa).

Residues 21–96 (FEGLVDTGAD…IPLNLWGRDL (76 aa)) enclose the Peptidase A2 domain. The active site involves aspartate 26. The region spanning 111–156 (YSPTSQKIMTKMGYIPGKGLGKNEDGIKIPVEAKINQKREGIGYPF) is the G-patch domain.

Belongs to the peptidase A2 family. HERV class-II K(HML-2) subfamily. Active as a homodimer. Post-translationally, autoproteolytically processed at the N-terminus. Expected C-terminal autoprocessing not detected. The sequence shown is that of the processed Pro protein.

The catalysed reaction is Processing at the authentic HIV-1 PR recognition site and release of the mature p17 matrix and the p24 capsid protein, as a result of the cleavage of the -SQNY-|-PIVQ- cleavage site.. Functionally, retroviral proteases have roles in the processing of the primary translation products and the maturation of the viral particle. Endogenous Pro proteins may have kept, lost or modified their original function during evolution. This chain is Endogenous retrovirus group K member 113 Pro protein (HERVK_113), found in Homo sapiens (Human).